The following is a 153-amino-acid chain: Nitrogen regulatory protein (153 aa).

The 144-residue stretch at 5 to 148 (DLVAPEAILP…QAIYSVLALP (144 aa)) folds into the PTS EIIA type-2 domain. His-66 serves as the catalytic Tele-phosphohistidine intermediate.

The protein resides in the cytoplasm. In terms of biological role, seems to have a role in regulating nitrogen assimilation. The sequence is that of Nitrogen regulatory protein (ptsN) from Bradyrhizobium diazoefficiens (strain JCM 10833 / BCRC 13528 / IAM 13628 / NBRC 14792 / USDA 110).